Consider the following 446-residue polypeptide: Cyclin-F2-2 (446 aa).

A disordered region spans residues 191–216 (YNGDNDAPAPDNSTASRPQLCAPYDD).

This sequence belongs to the cyclin family. Cyclin F subfamily.

The sequence is that of Cyclin-F2-2 (CYCF2-2) from Oryza sativa subsp. japonica (Rice).